Reading from the N-terminus, the 1076-residue chain is Zinc-regulated protein 8 (1076 aa).

Over residues 1 to 11 (MRSFIKAHKKS) the composition is skewed to basic residues. 4 disordered regions span residues 1 to 66 (MRSF…PGFE), 85 to 162 (SNLN…RTTD), 190 to 223 (PASP…TSPS), and 234 to 253 (KNKG…SSKK). The segment covering 23–34 (NFSGNTNNSSQR) has biased composition (polar residues). The span at 93–106 (STPTTSTNQTTSNS) shows a compositional bias: low complexity. Residues 107 to 117 (FVLQNPPTKNT) are compositionally biased toward polar residues. Pro residues predominate over residues 118-128 (GPPPPLPPPLF). 2 stretches are compositionally biased toward polar residues: residues 193–206 (PASN…SKQF) and 214–223 (ENLTSTTSPS). Phosphoserine occurs at positions 275 and 354. Disordered stretches follow at residues 357–450 (IRHG…DDES), 534–557 (LSDD…ESDN), and 566–585 (GKET…SLGE). Residues 362–378 (LQSSPSKVNKNDSQNET) are compositionally biased toward polar residues. Phosphoserine occurs at positions 403 and 407. The segment covering 408 to 418 (VNEKETHKAND) has biased composition (basic and acidic residues). A compositionally biased stretch (acidic residues) spans 419–450 (CNDESSENGDGDNDHDDDYDDDDDDDDDDDES). Residues 576–585 (GHHDDASLGE) are compositionally biased toward basic and acidic residues. A phosphoserine mark is found at Ser632 and Ser676. Disordered stretches follow at residues 658-701 (NIIR…KPTV), 713-762 (SASD…PHSQ), 909-931 (RRTL…FSSV), 1000-1020 (HNVG…QISN), and 1042-1076 (PTNS…PKRA). 2 stretches are compositionally biased toward polar residues: residues 690-701 (LTGTTGSTKPTV) and 739-748 (QVSLQSSLYE).

This sequence belongs to the ZRG8 family. Interacts with BUD27, GIS1 and SSD1.

Its subcellular location is the cytoplasm. The protein resides in the bud. The protein localises to the bud neck. It localises to the bud tip. In terms of biological role, involved in the integrity functions of RAM, a conserved signaling network that regulates maintenance of polarized growth and daughter-cell-specific transcription. The sequence is that of Zinc-regulated protein 8 (ZRG8) from Saccharomyces cerevisiae (strain ATCC 204508 / S288c) (Baker's yeast).